A 150-amino-acid polypeptide reads, in one-letter code: Avidin-related protein 7 (150 aa).

An N-terminal signal peptide occupies residues 1–24 (MVHATSPLLLLLLLSLALVAPGLS). Residues 26–147 (RKCSLTGEWD…GYNNFTRQRT (122 aa)) form the Avidin-like domain. C28 and C105 are joined by a disulfide. Biotin-binding residues include N36 and S40. 2 N-linked (GlcNAc...) asparagine glycosylation sites follow: N41 and N54. 3 residues coordinate biotin: Y57, T59, and D63. N-linked (GlcNAc...) asparagine glycosylation is present at N93. Residues S95, S99, and N140 each coordinate biotin. Residue N141 is glycosylated (N-linked (GlcNAc...) asparagine).

This sequence belongs to the avidin/streptavidin family. As to quaternary structure, homotetramer. In terms of processing, glycosylated.

Its subcellular location is the secreted. In terms of biological role, forms a strong non-covalent specific complex with biotin. This Gallus gallus (Chicken) protein is Avidin-related protein 7 (AVR7).